We begin with the raw amino-acid sequence, 119 residues long: Ubiquinone biosynthesis accessory factor UbiK (119 aa).

Residues 79–99 (LLRTREKLALLEQRLSELEAR) adopt a coiled-coil conformation. Residues 96-106 (LEARDKPEEVK) show a composition bias toward basic and acidic residues. The interval 96 to 119 (LEARDKPEEVKPAPAIPPVDPQQE) is disordered. A compositionally biased stretch (pro residues) spans 109–119 (PAIPPVDPQQE).

This sequence belongs to the UbiK family. In terms of assembly, homotrimer.

It is found in the cytoplasm. It functions in the pathway cofactor biosynthesis; ubiquinone biosynthesis. Required for efficient ubiquinone (coenzyme Q) biosynthesis under aerobic conditions. UbiK is probably an accessory factor of Ubi enzymes and facilitates ubiquinone biosynthesis by acting as an assembly factor, a targeting factor, or both. Dispensable for ubiquinone biosynthesis under anaerobiosis. Required for proliferation in macrophages and virulence in mice. Significantly contributes to colonization and invasion as well as host inflammation and innate immunity after infection. In vitro, has membrane fusogenic activity at acidic pH. In Salmonella typhimurium (strain LT2 / SGSC1412 / ATCC 700720), this protein is Ubiquinone biosynthesis accessory factor UbiK.